Reading from the N-terminus, the 465-residue chain is ATP synthase subunit beta (465 aa).

154–161 (GGAGVGKT) contacts ATP.

The protein belongs to the ATPase alpha/beta chains family. In terms of assembly, F-type ATPases have 2 components, CF(1) - the catalytic core - and CF(0) - the membrane proton channel. CF(1) has five subunits: alpha(3), beta(3), gamma(1), delta(1), epsilon(1). CF(0) has three main subunits: a(1), b(2) and c(9-12). The alpha and beta chains form an alternating ring which encloses part of the gamma chain. CF(1) is attached to CF(0) by a central stalk formed by the gamma and epsilon chains, while a peripheral stalk is formed by the delta and b chains.

Its subcellular location is the cell inner membrane. It carries out the reaction ATP + H2O + 4 H(+)(in) = ADP + phosphate + 5 H(+)(out). Its function is as follows. Produces ATP from ADP in the presence of a proton gradient across the membrane. The catalytic sites are hosted primarily by the beta subunits. This chain is ATP synthase subunit beta, found in Methylobacillus flagellatus (strain ATCC 51484 / DSM 6875 / VKM B-1610 / KT).